Consider the following 175-residue polypeptide: MTSLLITGYKAFEIGISTEKDMRIKIIKEAAKRDLIRFLEDGVDWLVFMGNLGFESWVLDLANELKKDYEFQTATIFLFENQGENWNEANQAKLAAFKQADFVKYAYPTYQNPSQFRDYNQFVIQNTDGAYLFYDEEQETKLKYLYQEMKKQEQYFIKKLTFDDLNEVAENFSGN.

Belongs to the UPF0398 family.

The protein is UPF0398 protein SSA_1858 of Streptococcus sanguinis (strain SK36).